The chain runs to 224 residues: Protein HLJ1 (224 aa).

One can recognise a J domain in the interval 18–87; it reads DKHEFYEILK…RSIYDRIGRD (70 aa). Residues 84–93 are compositionally biased toward basic and acidic residues; the sequence is IGRDPDDRQM. Residues 84–107 form a disordered region; the sequence is IGRDPDDRQMPSRGAASGFRGSAG. Serine 109 is modified (phosphoserine). Positions 173 to 192 are disordered; the sequence is NRGGSPFMRQQPRSRQQQQQ. A compositionally biased stretch (low complexity) spans 181–192; sequence RQQPRSRQQQQQ.

The polypeptide is Protein HLJ1 (HLJ1) (Saccharomyces cerevisiae (strain ATCC 204508 / S288c) (Baker's yeast)).